A 323-amino-acid chain; its full sequence is MASLRELRSRIRGVNSIKKITKAQELIATSRISKAQARVAAAKPYAEEITKVLGELASASKNLSHPLLTERPNPRRAAVLVITSDSGMCGGYNSNVLKRAEELMTTLRNEGKEPVLYVMGAKGLTYYTFRNRPFVSAWTGFSQQPKYTDASAACRHLVDAFMVGSDGEVPHPNGTGDIAGVDELHIVYTRFVSMLTQTPEVRRLAPIQVSFVDENFDMGEDSFSDSPTAEVQAQYEFEPDADVLLAALLPKYVNTRIYASLLEAAASESAARRTAMKAATDNANELASVLQREANSVRQAQITQEISEIVGGVNALASSSDRD.

The protein belongs to the ATPase gamma chain family. As to quaternary structure, F-type ATPases have 2 components, CF(1) - the catalytic core - and CF(0) - the membrane proton channel. CF(1) has five subunits: alpha(3), beta(3), gamma(1), delta(1), epsilon(1). CF(0) has three main subunits: a, b and c.

The protein localises to the cell membrane. Produces ATP from ADP in the presence of a proton gradient across the membrane. The gamma chain is believed to be important in regulating ATPase activity and the flow of protons through the CF(0) complex. The polypeptide is ATP synthase gamma chain (Nocardia farcinica (strain IFM 10152)).